A 484-amino-acid polypeptide reads, in one-letter code: Aspartyl/glutamyl-tRNA(Asn/Gln) amidotransferase subunit B (484 aa).

Belongs to the GatB/GatE family. GatB subfamily. As to quaternary structure, heterotrimer of A, B and C subunits.

The catalysed reaction is L-glutamyl-tRNA(Gln) + L-glutamine + ATP + H2O = L-glutaminyl-tRNA(Gln) + L-glutamate + ADP + phosphate + H(+). The enzyme catalyses L-aspartyl-tRNA(Asn) + L-glutamine + ATP + H2O = L-asparaginyl-tRNA(Asn) + L-glutamate + ADP + phosphate + 2 H(+). In terms of biological role, allows the formation of correctly charged Asn-tRNA(Asn) or Gln-tRNA(Gln) through the transamidation of misacylated Asp-tRNA(Asn) or Glu-tRNA(Gln) in organisms which lack either or both of asparaginyl-tRNA or glutaminyl-tRNA synthetases. The reaction takes place in the presence of glutamine and ATP through an activated phospho-Asp-tRNA(Asn) or phospho-Glu-tRNA(Gln). The protein is Aspartyl/glutamyl-tRNA(Asn/Gln) amidotransferase subunit B of Anaeromyxobacter dehalogenans (strain 2CP-1 / ATCC BAA-258).